We begin with the raw amino-acid sequence, 24 residues long: Sperm protamine P3 (24 aa).

Positions 1-24 are disordered; that stretch reads RRRRRRRRHRRRRGRRGRRSRGRR.

Testis.

Its subcellular location is the nucleus. The protein localises to the chromosome. Protamines substitute for histones in the chromatin of sperm during the haploid phase of spermatogenesis. They compact sperm DNA into a highly condensed, stable and inactive complex. The chain is Sperm protamine P3 from Octopus vulgaris (Common octopus).